Consider the following 467-residue polypeptide: Spermatogenesis- and oogenesis-specific basic helix-loop-helix-containing protein 2 (467 aa).

The bHLH domain maps to 200 to 251 (QASFLHSTKEKLRRERIKSCCEQLRTLLPYVKGRKSDVASVIEATVDYVKQV). A compositionally biased stretch (low complexity) spans 443 to 453 (ASASDHQASQP). The interval 443–467 (ASASDHQASQPPALPSPQPHDSSYF) is disordered.

In terms of assembly, forms both hetero- and homodimers with SOHLH1. As to expression, preferentially expressed in the adult ovary and testis. Expressed in the majority of spermatogonia in adult animals, but not in the most undifferentiated spermatogonial population.

The protein resides in the nucleus. It is found in the cytoplasm. In terms of biological role, transcription regulator of both male and female germline differentiation. Suppresses genes involved in spermatogonial stem cells maintenance, and induces genes important for spermatogonial differentiation. Coordinates oocyte differentiation without affecting meiosis I. This Mus musculus (Mouse) protein is Spermatogenesis- and oogenesis-specific basic helix-loop-helix-containing protein 2 (Sohlh2).